A 422-amino-acid polypeptide reads, in one-letter code: CinA-like protein (422 aa).

This sequence belongs to the CinA family.

The chain is CinA-like protein from Mycolicibacterium gilvum (strain PYR-GCK) (Mycobacterium gilvum (strain PYR-GCK)).